The sequence spans 365 residues: GDSL lipase (365 aa).

Positions M1–S27 are cleaved as a signal peptide. The active-site Nucleophile is the S40. N-linked (GlcNAc...) asparagine glycosylation is found at N189 and N310. Active-site charge relay system residues include D318 and H321.

The protein belongs to the 'GDSL' lipolytic enzyme family. Restricted to the pericarp during achene maturation. Expressed in the leaves of mature plants and seedlings, as well as in buds and flowers. Present in disk florets.

It is found in the secreted. It localises to the extracellular space. It catalyses the reaction (Z,S)-pyrethrolone + (1R,3R)-chrysanthemoyl-CoA = pyrethrin I + CoA. It carries out the reaction (Z,S)-pyrethrolone + (1R,3R)-pyrethroyl-CoA = pyrethrin II + CoA. The catalysed reaction is (Z,S)-jasmololone + (1R,3R)-chrysanthemoyl-CoA = jasmolin I + CoA. The enzyme catalyses (Z,S)-cinerolone + (1R,3R)-chrysanthemoyl-CoA = cinerin I + CoA. It catalyses the reaction (Z,S)-jasmololone + (1R,3R)-pyrethroyl-CoA = jasmolin II + CoA. It carries out the reaction (Z,S)-cinerolone + (1R,3R)-pyrethroyl-CoA = cinerin II + CoA. It participates in isoprenoid biosynthesis. Functionally, component of the monoterpenoid pyrethrins biosynthesis; pyrethrins are widely used plant-derived pesticide. Acyltransferase that catalyzes the esterification of terpene acids and lipid alcohol substrates into pyrethrins; mediates the transfer of a chrysanthemoyl moiety from the coenzyme A (CoA) thio-ester chrysanthemoyl CoA to pyrethrolone, and, to a lower extent, to jasmololone and cinerolone thus producing pyrethrins (e.g. pyrethrin type I). Can also use pyrethroyl CoA as substrate. Also has esterase activity, being able to cleave the ester bond of pyrethrin I, p-nitrophenyl butanoate and p-nitrophenyl octanoate to produce pyrethrolone and p-nitrophenol, respectively. The polypeptide is GDSL lipase (Tanacetum cinerariifolium (Dalmatian daisy)).